A 66-amino-acid polypeptide reads, in one-letter code: Conotoxin Cl14.1b (66 aa).

An N-terminal signal peptide occupies residues 1 to 19; it reads MNVTVMFLVLLLTMPLTDG. The propeptide occupies 20–47; the sequence is FNIRAINGGELFGLVQRDAGNALDHGFY.

This sequence belongs to the conotoxin L superfamily. Post-translationally, contains 2 disulfide bonds. Expressed by the venom duct.

It is found in the secreted. This Californiconus californicus (California cone) protein is Conotoxin Cl14.1b.